The chain runs to 317 residues: Transaldolase (317 aa).

Catalysis depends on K132, which acts as the Schiff-base intermediate with substrate.

The protein belongs to the transaldolase family. Type 1 subfamily. Homodimer.

It is found in the cytoplasm. It catalyses the reaction D-sedoheptulose 7-phosphate + D-glyceraldehyde 3-phosphate = D-erythrose 4-phosphate + beta-D-fructose 6-phosphate. Its pathway is carbohydrate degradation; pentose phosphate pathway; D-glyceraldehyde 3-phosphate and beta-D-fructose 6-phosphate from D-ribose 5-phosphate and D-xylulose 5-phosphate (non-oxidative stage): step 2/3. Transaldolase is important for the balance of metabolites in the pentose-phosphate pathway. In Yersinia pseudotuberculosis serotype IB (strain PB1/+), this protein is Transaldolase.